We begin with the raw amino-acid sequence, 234 residues long: Sugar fermentation stimulation protein homolog (234 aa).

It belongs to the SfsA family.

The sequence is that of Sugar fermentation stimulation protein homolog from Pseudoalteromonas atlantica (strain T6c / ATCC BAA-1087).